Here is a 226-residue protein sequence, read N- to C-terminus: Uracil-DNA glycosylase (226 aa).

Asp-68 (proton acceptor) is an active-site residue.

The protein belongs to the uracil-DNA glycosylase (UDG) superfamily. UNG family.

It is found in the cytoplasm. It catalyses the reaction Hydrolyzes single-stranded DNA or mismatched double-stranded DNA and polynucleotides, releasing free uracil.. Excises uracil residues from the DNA which can arise as a result of misincorporation of dUMP residues by DNA polymerase or due to deamination of cytosine. In Mycobacteroides abscessus (strain ATCC 19977 / DSM 44196 / CCUG 20993 / CIP 104536 / JCM 13569 / NCTC 13031 / TMC 1543 / L948) (Mycobacterium abscessus), this protein is Uracil-DNA glycosylase.